Reading from the N-terminus, the 176-residue chain is Large ribosomal subunit protein uL10 (176 aa).

The protein belongs to the universal ribosomal protein uL10 family. As to quaternary structure, part of the ribosomal stalk of the 50S ribosomal subunit. The N-terminus interacts with L11 and the large rRNA to form the base of the stalk. The C-terminus forms an elongated spine to which L12 dimers bind in a sequential fashion forming a multimeric L10(L12)X complex.

Forms part of the ribosomal stalk, playing a central role in the interaction of the ribosome with GTP-bound translation factors. The chain is Large ribosomal subunit protein uL10 from Dehalococcoides mccartyi (strain ATCC BAA-2100 / JCM 16839 / KCTC 5957 / BAV1).